The following is a 453-amino-acid chain: Bifunctional protein GlmU (453 aa).

The tract at residues 1–225 (MNIVILAAGT…EWETLGVNSK (225 aa)) is pyrophosphorylase. Residues 6 to 9 (LAAG), lysine 20, glutamine 71, 76 to 77 (GT), 98 to 100 (YGD), glycine 135, glutamate 150, asparagine 165, and asparagine 223 each bind UDP-N-acetyl-alpha-D-glucosamine. Mg(2+) is bound at residue aspartate 100. Asparagine 223 lines the Mg(2+) pocket. The segment at 226-246 (AQLAELERIHQRNLADALLAA) is linker. The interval 247–453 (GVTLADPARI…GYVRPVKKKS (207 aa)) is N-acetyltransferase. 2 residues coordinate UDP-N-acetyl-alpha-D-glucosamine: arginine 329 and lysine 347. Residue histidine 359 is the Proton acceptor of the active site. Tyrosine 362 and asparagine 373 together coordinate UDP-N-acetyl-alpha-D-glucosamine. Acetyl-CoA is bound by residues alanine 376, 382–383 (NY), serine 401, and alanine 419.

It in the N-terminal section; belongs to the N-acetylglucosamine-1-phosphate uridyltransferase family. The protein in the C-terminal section; belongs to the transferase hexapeptide repeat family. Homotrimer. Mg(2+) is required as a cofactor.

The protein resides in the cytoplasm. The catalysed reaction is alpha-D-glucosamine 1-phosphate + acetyl-CoA = N-acetyl-alpha-D-glucosamine 1-phosphate + CoA + H(+). It carries out the reaction N-acetyl-alpha-D-glucosamine 1-phosphate + UTP + H(+) = UDP-N-acetyl-alpha-D-glucosamine + diphosphate. It functions in the pathway nucleotide-sugar biosynthesis; UDP-N-acetyl-alpha-D-glucosamine biosynthesis; N-acetyl-alpha-D-glucosamine 1-phosphate from alpha-D-glucosamine 6-phosphate (route II): step 2/2. It participates in nucleotide-sugar biosynthesis; UDP-N-acetyl-alpha-D-glucosamine biosynthesis; UDP-N-acetyl-alpha-D-glucosamine from N-acetyl-alpha-D-glucosamine 1-phosphate: step 1/1. Its pathway is bacterial outer membrane biogenesis; LPS lipid A biosynthesis. In terms of biological role, catalyzes the last two sequential reactions in the de novo biosynthetic pathway for UDP-N-acetylglucosamine (UDP-GlcNAc). The C-terminal domain catalyzes the transfer of acetyl group from acetyl coenzyme A to glucosamine-1-phosphate (GlcN-1-P) to produce N-acetylglucosamine-1-phosphate (GlcNAc-1-P), which is converted into UDP-GlcNAc by the transfer of uridine 5-monophosphate (from uridine 5-triphosphate), a reaction catalyzed by the N-terminal domain. In Burkholderia mallei (strain NCTC 10247), this protein is Bifunctional protein GlmU.